The sequence spans 107 residues: uncharacterized protein (107 aa).

Residues 6 to 107 (KARIDQLVTA…QEMLEVALAS (102 aa)) enclose the Glutaredoxin domain. K23 is a binding site for glutathione. C31 lines the [2Fe-2S] cluster pocket. Residues R60 and 85-86 (SD) each bind glutathione.

Belongs to the glutaredoxin family. Monothiol subfamily.

This is an uncharacterized protein from Synechocystis sp. (strain ATCC 27184 / PCC 6803 / Kazusa).